The sequence spans 132 residues: MGRDTIANIITSIRNADMDKKGTVRIASTNITENIVKILLREGFIENVRKHQENQRFFLVSTLRHRRTSKGVYRTILKRISRPGLRIYSNYQRIPKILGGIGIVILSTSQGIMTDREARLKKIGGEILCYIW.

The protein belongs to the universal ribosomal protein uS8 family. Part of the 30S ribosomal subunit.

The protein resides in the plastid. Its subcellular location is the chloroplast. In terms of biological role, one of the primary rRNA binding proteins, it binds directly to 16S rRNA central domain where it helps coordinate assembly of the platform of the 30S subunit. The chain is Small ribosomal subunit protein uS8c (rps8) from Dioscorea elephantipes (Elephant's foot yam).